The following is a 114-amino-acid chain: Large ribosomal subunit protein uL22 (114 aa).

This sequence belongs to the universal ribosomal protein uL22 family. As to quaternary structure, part of the 50S ribosomal subunit.

This protein binds specifically to 23S rRNA; its binding is stimulated by other ribosomal proteins, e.g. L4, L17, and L20. It is important during the early stages of 50S assembly. It makes multiple contacts with different domains of the 23S rRNA in the assembled 50S subunit and ribosome. In terms of biological role, the globular domain of the protein is located near the polypeptide exit tunnel on the outside of the subunit, while an extended beta-hairpin is found that lines the wall of the exit tunnel in the center of the 70S ribosome. This is Large ribosomal subunit protein uL22 from Streptococcus pyogenes serotype M5 (strain Manfredo).